A 416-amino-acid chain; its full sequence is S-adenosylmethionine synthase (416 aa).

Position 14 (His14) interacts with ATP. Asp16 lines the Mg(2+) pocket. Glu42 contributes to the K(+) binding site. L-methionine is bound by residues Glu55 and Gln98. Residues 98–108 (QSADINQGVDR) form a flexible loop region. Residues 164-166 (DAK), 240-241 (KF), Asp249, 255-256 (RK), Ala272, and Lys276 each bind ATP. Asp249 contacts L-methionine. Position 280 (Lys280) interacts with L-methionine.

The protein belongs to the AdoMet synthase family. As to quaternary structure, homotetramer; dimer of dimers. Mg(2+) is required as a cofactor. The cofactor is K(+).

Its subcellular location is the cytoplasm. The catalysed reaction is L-methionine + ATP + H2O = S-adenosyl-L-methionine + phosphate + diphosphate. It functions in the pathway amino-acid biosynthesis; S-adenosyl-L-methionine biosynthesis; S-adenosyl-L-methionine from L-methionine: step 1/1. Its function is as follows. Catalyzes the formation of S-adenosylmethionine (AdoMet) from methionine and ATP. The overall synthetic reaction is composed of two sequential steps, AdoMet formation and the subsequent tripolyphosphate hydrolysis which occurs prior to release of AdoMet from the enzyme. This chain is S-adenosylmethionine synthase, found in Flavobacterium psychrophilum (strain ATCC 49511 / DSM 21280 / CIP 103535 / JIP02/86).